The sequence spans 229 residues: Potassium/proton antiporter CemA (229 aa).

4 helical membrane-spanning segments follow: residues 7–27 (FTPL…SFSF), 114–134 (IISF…LVVL), 154–174 (ILLL…ELMI), and 189–209 (IISG…KYWI).

The protein belongs to the CemA family.

It localises to the plastid. The protein resides in the chloroplast inner membrane. It catalyses the reaction K(+)(in) + H(+)(out) = K(+)(out) + H(+)(in). Contributes to K(+)/H(+) antiport activity by supporting proton efflux to control proton extrusion and homeostasis in chloroplasts in a light-dependent manner to modulate photosynthesis. Prevents excessive induction of non-photochemical quenching (NPQ) under continuous-light conditions. Indirectly promotes efficient inorganic carbon uptake into chloroplasts. The chain is Potassium/proton antiporter CemA from Nandina domestica (Heavenly bamboo).